The sequence spans 357 residues: Probable GTP 3',8-cyclase (357 aa).

The Radical SAM core domain maps to Asp5–Arg234. Arg14 provides a ligand contact to GTP. [4Fe-4S] cluster contacts are provided by Cys21 and Cys25. Tyr27 contacts S-adenosyl-L-methionine. Cys28 serves as a coordination point for [4Fe-4S] cluster. Lys68 serves as a coordination point for GTP. Gly72 provides a ligand contact to S-adenosyl-L-methionine. Thr96 serves as a coordination point for GTP. Ser120 serves as a coordination point for S-adenosyl-L-methionine. Residue Lys157 participates in GTP binding. Residues Ser232 to Asp256 form a disordered region. 2 residues coordinate [4Fe-4S] cluster: Cys272 and Cys275. Residue Arg277–Arg279 participates in GTP binding. Cys289 lines the [4Fe-4S] cluster pocket.

It belongs to the radical SAM superfamily. MoaA family. Requires [4Fe-4S] cluster as cofactor.

The catalysed reaction is GTP + AH2 + S-adenosyl-L-methionine = (8S)-3',8-cyclo-7,8-dihydroguanosine 5'-triphosphate + 5'-deoxyadenosine + L-methionine + A + H(+). Its pathway is cofactor biosynthesis; molybdopterin biosynthesis. Functionally, catalyzes the cyclization of GTP to (8S)-3',8-cyclo-7,8-dihydroguanosine 5'-triphosphate. This is Probable GTP 3',8-cyclase from Halobacterium salinarum (strain ATCC 29341 / DSM 671 / R1).